The following is a 135-amino-acid chain: ATP synthase epsilon chain (135 aa).

This sequence belongs to the ATPase epsilon chain family. F-type ATPases have 2 components, CF(1) - the catalytic core - and CF(0) - the membrane proton channel. CF(1) has five subunits: alpha(3), beta(3), gamma(1), delta(1), epsilon(1). CF(0) has three main subunits: a, b and c.

The protein localises to the cell inner membrane. Produces ATP from ADP in the presence of a proton gradient across the membrane. In Rhizobium leguminosarum bv. trifolii (strain WSM2304), this protein is ATP synthase epsilon chain.